Reading from the N-terminus, the 217-residue chain is Uridylate kinase (217 aa).

6–10 is a binding site for ATP; it reads KISGR. Glycine 38 lines the UMP pocket. Residues glycine 39 and arginine 43 each coordinate ATP. UMP contacts are provided by residues aspartate 60 and 107–113; that span reads FQPGQST. Residues asparagine 134, tyrosine 139, and aspartate 142 each coordinate ATP.

It belongs to the UMP kinase family. In terms of assembly, homohexamer.

It localises to the cytoplasm. The catalysed reaction is UMP + ATP = UDP + ADP. Its pathway is pyrimidine metabolism; CTP biosynthesis via de novo pathway; UDP from UMP (UMPK route): step 1/1. Its activity is regulated as follows. Inhibited by UTP. Functionally, catalyzes the reversible phosphorylation of UMP to UDP. The chain is Uridylate kinase from Pyrobaculum arsenaticum (strain DSM 13514 / JCM 11321 / PZ6).